The chain runs to 867 residues: Alanine--tRNA ligase (867 aa).

4 residues coordinate Zn(2+): H554, H558, C656, and H660.

This sequence belongs to the class-II aminoacyl-tRNA synthetase family. The cofactor is Zn(2+).

Its subcellular location is the cytoplasm. It catalyses the reaction tRNA(Ala) + L-alanine + ATP = L-alanyl-tRNA(Ala) + AMP + diphosphate. Its function is as follows. Catalyzes the attachment of alanine to tRNA(Ala) in a two-step reaction: alanine is first activated by ATP to form Ala-AMP and then transferred to the acceptor end of tRNA(Ala). Also edits incorrectly charged Ser-tRNA(Ala) and Gly-tRNA(Ala) via its editing domain. In Methylococcus capsulatus (strain ATCC 33009 / NCIMB 11132 / Bath), this protein is Alanine--tRNA ligase.